Reading from the N-terminus, the 260-residue chain is NH(3)-dependent NAD(+) synthetase (260 aa).

Residue 31 to 38 participates in ATP binding; that stretch reads GLSGGLDS. Asp37 contacts Mg(2+). Arg112 provides a ligand contact to deamido-NAD(+). Thr132 is an ATP binding site. Glu137 serves as a coordination point for Mg(2+). ATP-binding residues include Lys161 and Ser183.

Belongs to the NAD synthetase family. As to quaternary structure, homodimer.

It carries out the reaction deamido-NAD(+) + NH4(+) + ATP = AMP + diphosphate + NAD(+) + H(+). Its pathway is cofactor biosynthesis; NAD(+) biosynthesis; NAD(+) from deamido-NAD(+) (ammonia route): step 1/1. Its function is as follows. Catalyzes the ATP-dependent amidation of deamido-NAD to form NAD. Uses ammonia as a nitrogen source. The sequence is that of NH(3)-dependent NAD(+) synthetase from Helicobacter pylori (strain HPAG1).